A 269-amino-acid chain; its full sequence is Monofunctional glycosyltransferase (269 aa).

A helical transmembrane segment spans residues 46–66 (AIITILILLIIFFGVMYFISS).

Belongs to the glycosyltransferase 51 family.

Its subcellular location is the cell membrane. It carries out the reaction [GlcNAc-(1-&gt;4)-Mur2Ac(oyl-L-Ala-gamma-D-Glu-L-Lys-D-Ala-D-Ala)](n)-di-trans,octa-cis-undecaprenyl diphosphate + beta-D-GlcNAc-(1-&gt;4)-Mur2Ac(oyl-L-Ala-gamma-D-Glu-L-Lys-D-Ala-D-Ala)-di-trans,octa-cis-undecaprenyl diphosphate = [GlcNAc-(1-&gt;4)-Mur2Ac(oyl-L-Ala-gamma-D-Glu-L-Lys-D-Ala-D-Ala)](n+1)-di-trans,octa-cis-undecaprenyl diphosphate + di-trans,octa-cis-undecaprenyl diphosphate + H(+). It functions in the pathway cell wall biogenesis; peptidoglycan biosynthesis. Functionally, peptidoglycan polymerase that catalyzes glycan chain elongation using lipid-linked disaccharide-pentapeptide as the substrate. This is Monofunctional glycosyltransferase from Staphylococcus epidermidis (strain ATCC 35984 / DSM 28319 / BCRC 17069 / CCUG 31568 / BM 3577 / RP62A).